A 422-amino-acid chain; its full sequence is MDLENKMKKMGLGHEQGFGAPCLKCKEKCEGFELHFWRKICRNCKCGQEEHDVFMSNEEDRKVGKLFEDTKYTTLIAKLKTDGIPMYKRNVMILTNPVPAKKNVSINTVTYEWAPPVQNQALARRYMQMLPRNKQPVAGSEGAQYRKKQLAKQLPAHDQDPSKCHELTPNEVKQMEQFVKKYKNEALGVGDVKLPSEMDVKPGDRSSLDGGDRGTTAEVGAVEDKSSADKKEDYSCYCCKQSMKEGDPAVYAERAGYDKFWHPACFICNTCSELLVDMIYFWKNGKLFCGRHYCDSEKPRCAGCDELIFSNEYTQAEDQNWHLKHFCCFDCDSILAGEIYVMVDNKPICKPCYVRNHAVICQGCHNAIDPEVQRVTYNNFNWHATEECFLCSCCSKCLIGQKFIPIEAMLFCSVECKKMMMS.

One can recognise a PET domain in the interval 92–199 (MILTNPVPAK…GDVKLPSEMD (108 aa)). 2 disordered regions span residues 135 to 162 (QPVA…QDPS) and 194 to 226 (LPSE…EDKS). The segment covering 194-212 (LPSEMDVKPGDRSSLDGGD) has biased composition (basic and acidic residues). LIM zinc-binding domains lie at 234-297 (YSCY…CDSE), 299-359 (PRCA…NHAV), and 362-422 (QGCH…MMMS).

The protein belongs to the prickle / espinas / testin family. In terms of assembly, interacts via LIM domain 1 with ZYX. Interacts (via LIM domain 3) with ENAH and VASP. Interacts with ALKBH4, talin, actin, alpha-actinin, GRIP1 and PXN. Interacts (via LIM domain 2) with ACTL7A (via N-terminus). Heterodimer with ACTL7A; the heterodimer interacts with ENAH to form a heterotrimer.

It localises to the cytoplasm. It is found in the cell junction. The protein localises to the focal adhesion. Functionally, scaffold protein that may play a role in cell adhesion, cell spreading and in the reorganization of the actin cytoskeleton. Plays a role in the regulation of cell proliferation. May act as a tumor suppressor. This is Testin (TES) from Monodelphis domestica (Gray short-tailed opossum).